The sequence spans 452 residues: Bifunctional protein GlmU (452 aa).

The segment at 1–225 (MDVVILAAGL…ENELIGINTR (225 aa)) is pyrophosphorylase. UDP-N-acetyl-alpha-D-glucosamine contacts are provided by residues 6–9 (LAAG), Lys20, Gln71, and 76–77 (GT). Asp99 contacts Mg(2+). Residues Gly136, Glu151, Asn166, and Asn223 each contribute to the UDP-N-acetyl-alpha-D-glucosamine site. Residue Asn223 participates in Mg(2+) binding. A linker region spans residues 226–246 (AELSLAMRYLRDRIVKGWMEK). Residues 247-452 (GITFYDPALV…LGWAKKKRKQ (206 aa)) form an N-acetyltransferase region. Arg329 and Lys347 together coordinate UDP-N-acetyl-alpha-D-glucosamine. The Proton acceptor role is filled by His359. UDP-N-acetyl-alpha-D-glucosamine is bound by residues Tyr362 and Asn373. Residues Ala376, 382-383 (NY), Ser401, Ala419, and Arg436 contribute to the acetyl-CoA site.

In the N-terminal section; belongs to the N-acetylglucosamine-1-phosphate uridyltransferase family. It in the C-terminal section; belongs to the transferase hexapeptide repeat family. As to quaternary structure, homotrimer. It depends on Mg(2+) as a cofactor.

Its subcellular location is the cytoplasm. The catalysed reaction is alpha-D-glucosamine 1-phosphate + acetyl-CoA = N-acetyl-alpha-D-glucosamine 1-phosphate + CoA + H(+). It carries out the reaction N-acetyl-alpha-D-glucosamine 1-phosphate + UTP + H(+) = UDP-N-acetyl-alpha-D-glucosamine + diphosphate. The protein operates within nucleotide-sugar biosynthesis; UDP-N-acetyl-alpha-D-glucosamine biosynthesis; N-acetyl-alpha-D-glucosamine 1-phosphate from alpha-D-glucosamine 6-phosphate (route II): step 2/2. It functions in the pathway nucleotide-sugar biosynthesis; UDP-N-acetyl-alpha-D-glucosamine biosynthesis; UDP-N-acetyl-alpha-D-glucosamine from N-acetyl-alpha-D-glucosamine 1-phosphate: step 1/1. It participates in bacterial outer membrane biogenesis; LPS lipid A biosynthesis. Functionally, catalyzes the last two sequential reactions in the de novo biosynthetic pathway for UDP-N-acetylglucosamine (UDP-GlcNAc). The C-terminal domain catalyzes the transfer of acetyl group from acetyl coenzyme A to glucosamine-1-phosphate (GlcN-1-P) to produce N-acetylglucosamine-1-phosphate (GlcNAc-1-P), which is converted into UDP-GlcNAc by the transfer of uridine 5-monophosphate (from uridine 5-triphosphate), a reaction catalyzed by the N-terminal domain. The chain is Bifunctional protein GlmU from Thermodesulfovibrio yellowstonii (strain ATCC 51303 / DSM 11347 / YP87).